A 531-amino-acid polypeptide reads, in one-letter code: Fatty acid--[acyl-carrier-protein] ligase MmaC (531 aa).

A Mg(2+)-binding site is contributed by Thr169. Residues Ile218, Val308, and Ser312 each coordinate ATP. Residue Glu313 coordinates Mg(2+). Position 403 (Asp403) interacts with ATP.

It belongs to the ATP-dependent AMP-binding enzyme family. It depends on Mg(2+) as a cofactor.

The catalysed reaction is a (2E)-enoyl fatty acid + holo-[ACP] + ATP = a (2E)-enoyl-[ACP] + AMP + diphosphate. It catalyses the reaction a (2E)-enoyl fatty acid + ATP + H(+) = a (2E)-2-fatty-enoyl-AMP + diphosphate. The enzyme catalyses a (2E)-2-fatty-enoyl-AMP + holo-[ACP] = a (2E)-enoyl-[ACP] + AMP + H(+). It carries out the reaction (2E)-decenoate + holo-[ACP] + ATP = (2E)-decenoyl-[ACP] + AMP + diphosphate. The catalysed reaction is a (3R)-3-isocyanyl-fatty acid + holo-[ACP] + ATP = a (3R)-3-isocyanyl-fatty acyl-[ACP] + AMP + diphosphate. It catalyses the reaction a (3R)-3-isocyanyl-fatty acid + ATP + H(+) = a (3R)-3-isocyanyl-fatty acyl-AMP + diphosphate. The enzyme catalyses a (3R)-3-isocyanyl-fatty acyl-AMP + holo-[ACP] = a (3R)-3-isocyanyl-fatty acyl-[ACP] + AMP + H(+). In terms of biological role, acyl:acyl-carrier protein ligase involved in the biosynthesis of a unique class of isonitrile lipopeptides (INLPs) that seem to play a role in metal acquisition in M.marinum. Acts twice during the INLP pathway, catalyzing the activation of (2E)-2-decenoate as well as probably the corresponding (3R)-3-isocyanyl-fatty acid as acyl-adenylates (acyl-AMP), and then the acyl transfer to the dedicated acyl-carrier protein MmaB. In Mycobacterium marinum (strain ATCC BAA-535 / M), this protein is Fatty acid--[acyl-carrier-protein] ligase MmaC.